Consider the following 477-residue polypeptide: MSPQTETKASVGFKAGVKDYKLTYYTPDYETKDTDILAAFRVTPQPGVPPEEAGAAVAAESSTGTWTTVWTDGLTSLDRYKGRCYGIEPVPGEESQFIAYVAYPLDLFEEGSVTNMFTSIVGKVFGFKALRALRLEDLRIPIAYVKTFQGPRHGIQVERDKLNKYGRPLLGCTIKPKLGLSAKNYGRAVYECLRGGLDFTKDDENVNSQPFMRWRDRFLFCTEALFKAQTETGEIKGHYLNATAGTCEEMMKRAVFARELGVPIIMHDYLTGGFTANTTLAHYCRDNGLLLHIHRAMHAVIDRQKNHGMHFRVLAKALRMSGGDHIHSGTVVGKLEGEREITLGFVDLLRDDFIEKDRSRGIYFTQDWVSLPGVLPVASGGIHVWHMPALTEIFGDDSVLQFGGGTLGHPWGNAPGAVANRVALEACVQARNEGRDLAREGNEIIREAAKWSPELAAACEVWKAIKFEFNPVDTLDX.

The propeptide occupies 1 to 2 (MS). At Pro-3 the chain carries N-acetylproline. Lys-14 is subject to N6,N6,N6-trimethyllysine. Substrate is bound at residue Thr-173. The active-site Proton acceptor is Lys-175. Position 177 (Lys-177) interacts with substrate. Positions 201, 203, and 204 each coordinate Mg(2+). Lys-201 is modified (N6-carboxylysine). His-294 (proton acceptor) is an active-site residue. Substrate is bound by residues Arg-295, His-327, and Ser-379.

Belongs to the RuBisCO large chain family. Type I subfamily. In terms of assembly, heterohexadecamer of 8 large chains and 8 small chains; disulfide-linked. The disulfide link is formed within the large subunit homodimers. The cofactor is Mg(2+). In terms of processing, the disulfide bond which can form in the large chain dimeric partners within the hexadecamer appears to be associated with oxidative stress and protein turnover.

Its subcellular location is the plastid. It localises to the chloroplast. It carries out the reaction 2 (2R)-3-phosphoglycerate + 2 H(+) = D-ribulose 1,5-bisphosphate + CO2 + H2O. The enzyme catalyses D-ribulose 1,5-bisphosphate + O2 = 2-phosphoglycolate + (2R)-3-phosphoglycerate + 2 H(+). Its function is as follows. RuBisCO catalyzes two reactions: the carboxylation of D-ribulose 1,5-bisphosphate, the primary event in carbon dioxide fixation, as well as the oxidative fragmentation of the pentose substrate in the photorespiration process. Both reactions occur simultaneously and in competition at the same active site. The protein is Ribulose bisphosphate carboxylase large chain of Gerbera jamesonii (Transvaal daisy).